A 242-amino-acid chain; its full sequence is Putative pyrimidine-specific ribonucleoside hydrolase RihB (242 aa).

Glutamine 156 and histidine 168 together coordinate substrate.

The protein belongs to the IUNH family. RihB subfamily.

The enzyme catalyses a pyrimidine ribonucleoside + H2O = a pyrimidine nucleobase + D-ribose. This chain is Putative pyrimidine-specific ribonucleoside hydrolase RihB (rihB), found in Shigella boydii serotype 4 (strain Sb227).